The primary structure comprises 103 residues: MYAVIKTGGKQYRVAAGEKIKVEQIAAEVGQEIVIDQVLAVGNGAELKVGTPLVSGATVKATVVAHGKHDKVRIFKMRRRKHYQKRQGHRQQFTELQIQAIAA.

It belongs to the bacterial ribosomal protein bL21 family. Part of the 50S ribosomal subunit. Contacts protein L20.

In terms of biological role, this protein binds to 23S rRNA in the presence of protein L20. The sequence is that of Large ribosomal subunit protein bL21 from Acidovorax ebreus (strain TPSY) (Diaphorobacter sp. (strain TPSY)).